A 212-amino-acid chain; its full sequence is Calaxin (212 aa).

EF-hand domains lie at 65–100, 101–136, and 146–181; these read TDDM…FLRG, TLDE…SLLK, and GIKD…ENLL. The Ca(2+) site is built by Asp-78, Asp-80, Asp-82, Cys-84, Glu-89, Asp-114, Asn-116, Asp-118, Glu-125, Asp-159, Asp-161, Asp-163, Lys-165, and Asp-170.

As to quaternary structure, component of the outer dynein arm-docking complex along with ODAD1, ODAD2, ODAD3 and ODAD4.

Its subcellular location is the cytoplasm. It localises to the cytoskeleton. The protein resides in the cilium axoneme. It is found in the cell projection. The protein localises to the cilium. Its subcellular location is the flagellum. Component of the outer dynein arm-docking complex (ODA-DC) that mediates outer dynein arms (ODA) binding onto the doublet microtubule. Seems to regulate the assembly of both ODAs and their axonemal docking complex onto ciliary microtubules. Regulates ciliary and flagellar motility and is required for cilia-driven determination of body laterality. This Mus musculus (Mouse) protein is Calaxin (Clxn).